Reading from the N-terminus, the 186-residue chain is Peptidyl-tRNA hydrolase (186 aa).

Residue Y14 coordinates tRNA. H19 acts as the Proton acceptor in catalysis. Residues Y61, N63, and N107 each coordinate tRNA.

Belongs to the PTH family. As to quaternary structure, monomer.

The protein localises to the cytoplasm. It carries out the reaction an N-acyl-L-alpha-aminoacyl-tRNA + H2O = an N-acyl-L-amino acid + a tRNA + H(+). Its function is as follows. Hydrolyzes ribosome-free peptidyl-tRNAs (with 1 or more amino acids incorporated), which drop off the ribosome during protein synthesis, or as a result of ribosome stalling. Catalyzes the release of premature peptidyl moieties from peptidyl-tRNA molecules trapped in stalled 50S ribosomal subunits, and thus maintains levels of free tRNAs and 50S ribosomes. In Helicobacter pylori (strain HPAG1), this protein is Peptidyl-tRNA hydrolase.